The sequence spans 744 residues: Catalase-peroxidase (744 aa).

The N-terminal stretch at 1 to 22 (MSPRARRCTDRCARMSERSMNA) is a signal peptide. The tryptophyl-tyrosyl-methioninium (Trp-Tyr) (with M-260) cross-link spans 114–234 (WHSAGTYRLA…LGATEMGLIY (121 aa)). The active-site Proton acceptor is the His-115. The segment at residues 234–260 (YVNPEGPDRNGDPISAAKFIRETFARM) is a cross-link (tryptophyl-tyrosyl-methioninium (Tyr-Met) (with W-114)). His-275 contacts heme b.

Belongs to the peroxidase family. Peroxidase/catalase subfamily. In terms of assembly, homodimer or homotetramer. Heme b serves as cofactor. Formation of the three residue Trp-Tyr-Met cross-link is important for the catalase, but not the peroxidase activity of the enzyme.

It catalyses the reaction H2O2 + AH2 = A + 2 H2O. The catalysed reaction is 2 H2O2 = O2 + 2 H2O. Functionally, bifunctional enzyme with both catalase and broad-spectrum peroxidase activity. The sequence is that of Catalase-peroxidase from Azorhizobium caulinodans (strain ATCC 43989 / DSM 5975 / JCM 20966 / LMG 6465 / NBRC 14845 / NCIMB 13405 / ORS 571).